We begin with the raw amino-acid sequence, 83 residues long: U-actitoxin-Avd8d (83 aa).

An N-terminal signal peptide occupies residues 1–19 (MASTRLFVLLVIGTVLLCQ). A propeptide spanning residues 20–38 (VSGFLDELLAEHELPQDMT) is cleaved from the precursor.

It belongs to the sea anemone 8 toxin family.

It is found in the secreted. Its subcellular location is the nematocyst. The chain is U-actitoxin-Avd8d from Anemonia viridis (Snakelocks anemone).